The sequence spans 186 residues: Large ribosomal subunit protein uL5 (186 aa).

Belongs to the universal ribosomal protein uL5 family. Part of the 50S ribosomal subunit; contacts the 5S rRNA and probably tRNA. Forms a bridge to the 30S subunit in the 70S ribosome.

Functionally, this is one of the proteins that bind and probably mediate the attachment of the 5S RNA into the large ribosomal subunit, where it forms part of the central protuberance. In the 70S ribosome it contacts protein S13 of the 30S subunit (bridge B1b), connecting the 2 subunits; this bridge is implicated in subunit movement. May contact the P site tRNA; the 5S rRNA and some of its associated proteins might help stabilize positioning of ribosome-bound tRNAs. This is Large ribosomal subunit protein uL5 from Methanopyrus kandleri (strain AV19 / DSM 6324 / JCM 9639 / NBRC 100938).